Consider the following 555-residue polypeptide: CTP synthase (555 aa).

Positions 1-271 (MVKRGKKTKY…DDKLAELFNI (271 aa)) are amidoligase domain. Ser19 is a binding site for CTP. Ser19 contributes to the UTP binding site. ATP-binding positions include 20-25 (SLGKGL) and Asp77. Residues Asp77 and Glu145 each coordinate Mg(2+). CTP is bound by residues 152 to 154 (DIE), 192 to 197 (KTKPTQ), and Lys228. UTP contacts are provided by residues 192–197 (KTKPTQ) and Lys228. Residues 297–537 (RIGIVGKYVE…VKAALEHRDA (241 aa)) enclose the Glutamine amidotransferase type-1 domain. Gly358 is a binding site for L-glutamine. The active-site Nucleophile; for glutamine hydrolysis is the Cys385. L-glutamine-binding positions include 386–389 (LGLQ), Glu409, and Arg466. Active-site residues include His510 and Glu512. A disordered region spans residues 535–555 (RDAQQRQPPAEVKKLAVGKNG).

It belongs to the CTP synthase family. Homotetramer.

It catalyses the reaction UTP + L-glutamine + ATP + H2O = CTP + L-glutamate + ADP + phosphate + 2 H(+). The enzyme catalyses L-glutamine + H2O = L-glutamate + NH4(+). It carries out the reaction UTP + NH4(+) + ATP = CTP + ADP + phosphate + 2 H(+). The protein operates within pyrimidine metabolism; CTP biosynthesis via de novo pathway; CTP from UDP: step 2/2. Allosterically activated by GTP, when glutamine is the substrate; GTP has no effect on the reaction when ammonia is the substrate. The allosteric effector GTP functions by stabilizing the protein conformation that binds the tetrahedral intermediate(s) formed during glutamine hydrolysis. Inhibited by the product CTP, via allosteric rather than competitive inhibition. Functionally, catalyzes the ATP-dependent amination of UTP to CTP with either L-glutamine or ammonia as the source of nitrogen. Regulates intracellular CTP levels through interactions with the four ribonucleotide triphosphates. In Anaeromyxobacter sp. (strain K), this protein is CTP synthase.